The primary structure comprises 186 residues: Ribosome-recycling factor (186 aa).

The protein belongs to the RRF family.

The protein resides in the cytoplasm. Functionally, responsible for the release of ribosomes from messenger RNA at the termination of protein biosynthesis. May increase the efficiency of translation by recycling ribosomes from one round of translation to another. This is Ribosome-recycling factor from Chlorobium phaeovibrioides (strain DSM 265 / 1930) (Prosthecochloris vibrioformis (strain DSM 265)).